Reading from the N-terminus, the 590-residue chain is Protein Spindly (590 aa).

Residues 1 to 401 (MSDLEDEIKV…SMARMKALSE (401 aa)) are a coiled coil. The tract at residues 446–590 (NKAQVQKRRR…KTMANECAQQ (145 aa)) is disordered. Basic and acidic residues-rich tracts occupy residues 483 to 497 (SNEK…HPVE) and 518 to 527 (RESKSVRICE). Polar residues-rich tracts occupy residues 541 to 554 (VNDS…QTHQ) and 572 to 590 (QQPT…CAQQ).

This sequence belongs to the Spindly family.

Its subcellular location is the chromosome. It is found in the centromere. The protein resides in the kinetochore. Functionally, required for the localization of dynein and dynactin to the mitotic kintochore. Dynein is believed to control the initial lateral interaction between the kinetochore and spindle microtubules and to facilitate the subsequent formation of end-on kinetochore-microtubule attachments mediated by the NDC80 complex. May act as an adapter protein linking the dynein motor complex to various cargos. In Danio rerio (Zebrafish), this protein is Protein Spindly (spdl1).